The following is a 389-amino-acid chain: Geranylgeranyl pyrophosphate synthase A (389 aa).

Residues K99, R102, and H131 each coordinate isopentenyl diphosphate. Positions 138 and 142 each coordinate Mg(2+). R147 contacts dimethylallyl diphosphate. R148 serves as a coordination point for isopentenyl diphosphate.

This sequence belongs to the FPP/GGPP synthase family. Mg(2+) is required as a cofactor.

The protein resides in the cytoplasm. It catalyses the reaction isopentenyl diphosphate + (2E)-geranyl diphosphate = (2E,6E)-farnesyl diphosphate + diphosphate. The enzyme catalyses isopentenyl diphosphate + (2E,6E)-farnesyl diphosphate = (2E,6E,10E)-geranylgeranyl diphosphate + diphosphate. It functions in the pathway isoprenoid biosynthesis; farnesyl diphosphate biosynthesis; farnesyl diphosphate from geranyl diphosphate and isopentenyl diphosphate: step 1/1. It participates in isoprenoid biosynthesis; geranylgeranyl diphosphate biosynthesis; geranylgeranyl diphosphate from farnesyl diphosphate and isopentenyl diphosphate: step 1/1. In terms of biological role, catalyzes the trans-addition of the 2 molecules of isopentenyl diphosphate (IPP) onto geranyl diphosphate (GDP) to form geranylgeranyl pyrophosphate (GGDP). Does not catalyze the conversion of dimethylallyl diphosphate (DMAPP). The polypeptide is Geranylgeranyl pyrophosphate synthase A (GGS-A) (Phomopsis amygdali (Fusicoccum amygdali)).